Reading from the N-terminus, the 517-residue chain is Alpha-amylase (517 aa).

Residues 1–21 form the signal peptide; it reads MAHLLLAVVAITLALSQSVFG. A disulfide bond links cysteine 52 and cysteine 108. Ca(2+) contacts are provided by asparagine 122, arginine 178, and aspartate 187. Arginine 215 contributes to the chloride binding site. Aspartate 217 functions as the Nucleophile in the catalytic mechanism. Histidine 221 is a binding site for Ca(2+). Glutamate 253 functions as the Proton donor in the catalytic mechanism. Residue arginine 355 coordinates chloride. 2 cysteine pairs are disulfide-bonded: cysteine 397/cysteine 403 and cysteine 470/cysteine 482.

It belongs to the glycosyl hydrolase 13 family. In terms of assembly, monomer. Ca(2+) serves as cofactor. Requires chloride as cofactor.

It localises to the secreted. It catalyses the reaction Endohydrolysis of (1-&gt;4)-alpha-D-glucosidic linkages in polysaccharides containing three or more (1-&gt;4)-alpha-linked D-glucose units.. Its activity is regulated as follows. Activated by chloride ions. Inhibited by acarbose. Not inhibited by wheat alpha-amylase inhibitors 1 (WI-1, the tetrameric form) or 3 (WI-3, the monomeric form) and bean alpha-amylase inhibitor 1 (alphaAI-1). This chain is Alpha-amylase, found in Acarus siro (Flour mite).